The following is a 350-amino-acid chain: Uroporphyrinogen decarboxylase (350 aa).

Substrate-binding positions include 28 to 32 (RQAGR), aspartate 78, tyrosine 154, threonine 209, and histidine 325.

Belongs to the uroporphyrinogen decarboxylase family. Homodimer.

The protein resides in the cytoplasm. The enzyme catalyses uroporphyrinogen III + 4 H(+) = coproporphyrinogen III + 4 CO2. It participates in porphyrin-containing compound metabolism; protoporphyrin-IX biosynthesis; coproporphyrinogen-III from 5-aminolevulinate: step 4/4. Its function is as follows. Catalyzes the decarboxylation of four acetate groups of uroporphyrinogen-III to yield coproporphyrinogen-III. This is Uroporphyrinogen decarboxylase from Nitrobacter hamburgensis (strain DSM 10229 / NCIMB 13809 / X14).